A 447-amino-acid polypeptide reads, in one-letter code: MKKEYFGTDGIRGRVGDYPITPDFMLKLGWAAGCVFAREMPGRRVLIGKDTRISGYMFESALEAGFSAAGVDTQLLGPMPTPAVAYLTRTLRAQAGVVISASHNPYYDNGIKFFGPDGMKLPDELELLIEDYLGRPMTTVECSHIGKATRIVDAAGRYIEFCKSTIPLGMHFSGMKIVVDCAHGSTYHVAPDVFSELRATVSTLGVAPDGLNINDRVGATDPENLRQTVLEENADLGIALDGDGDRLIMVDHRGEVVDGDELLFVIANARHAEGELKGSVVGTLMSNLGLEQAIRRLGLEFRRAAVGDRYVMEMMLEHGSMLGGEGSGHIICRDRTTTGDGIVSALQVLAEIVRSGKTLHELKQGMRKYPQRLVNVRLAERVSLASVPLVQKVKAEVEAELGDSGRVLLRPSGTEPLIRVMVEGADEGQVRELADRLAGAVARAFSA.

The Phosphoserine intermediate role is filled by S102. The Mg(2+) site is built by S102, D241, D243, and D245. S102 is subject to Phosphoserine.

Belongs to the phosphohexose mutase family. The cofactor is Mg(2+). Activated by phosphorylation.

It carries out the reaction alpha-D-glucosamine 1-phosphate = D-glucosamine 6-phosphate. Functionally, catalyzes the conversion of glucosamine-6-phosphate to glucosamine-1-phosphate. This Methylococcus capsulatus (strain ATCC 33009 / NCIMB 11132 / Bath) protein is Phosphoglucosamine mutase.